Reading from the N-terminus, the 194-residue chain is Orotate phosphoribosyltransferase (194 aa).

117-125 lines the 5-phospho-alpha-D-ribose 1-diphosphate pocket; the sequence is EDIVSTGLS. Orotate is bound by residues Ser121 and Arg149.

It belongs to the purine/pyrimidine phosphoribosyltransferase family. PyrE subfamily. In terms of assembly, homodimer. Mg(2+) is required as a cofactor.

It catalyses the reaction orotidine 5'-phosphate + diphosphate = orotate + 5-phospho-alpha-D-ribose 1-diphosphate. It participates in pyrimidine metabolism; UMP biosynthesis via de novo pathway; UMP from orotate: step 1/2. In terms of biological role, catalyzes the transfer of a ribosyl phosphate group from 5-phosphoribose 1-diphosphate to orotate, leading to the formation of orotidine monophosphate (OMP). The polypeptide is Orotate phosphoribosyltransferase (Maricaulis maris (strain MCS10) (Caulobacter maris)).